The chain runs to 187 residues: Elongation factor P (187 aa).

It belongs to the elongation factor P family.

The protein resides in the cytoplasm. It participates in protein biosynthesis; polypeptide chain elongation. Its function is as follows. Involved in peptide bond synthesis. Stimulates efficient translation and peptide-bond synthesis on native or reconstituted 70S ribosomes in vitro. Probably functions indirectly by altering the affinity of the ribosome for aminoacyl-tRNA, thus increasing their reactivity as acceptors for peptidyl transferase. The polypeptide is Elongation factor P (Mycobacteroides abscessus (strain ATCC 19977 / DSM 44196 / CCUG 20993 / CIP 104536 / JCM 13569 / NCTC 13031 / TMC 1543 / L948) (Mycobacterium abscessus)).